Reading from the N-terminus, the 1548-residue chain is Dual oxidase 2 (1548 aa).

The first 25 residues, 1-25, serve as a signal peptide directing secretion; the sequence is MLRARPEALMLLGALLTGSLGPSGN. The Extracellular segment spans residues 26–601; the sequence is QDALSLPWEV…EGSSPGFAIT (576 aa). The segment at 30–596 is peroxidase-like; mediates peroxidase activity; the sequence is SLPWEVQRYD…VLDFFEGSSP (567 aa). N100, N348, N382, N455, and N537 each carry an N-linked (GlcNAc...) asparagine glycan. Cysteines 124 and 1162 form a disulfide. Residues 602-622 form a helical membrane-spanning segment; sequence IIALCCLPLVSLLLSGVVAYF. Topologically, residues 623 to 1041 are cytoplasmic; it reads RGREHKKLQK…KRFVENYRRH (419 aa). EF-hand domains are found at residues 819-854, 855-890, and 899-934; these read PQDM…FMKG, SPED…FIEI, and QLAE…HDSE. D832, D834, N836, Y838, E843, D868, D870, N872, and E879 together coordinate Ca(2+). The interaction with TXNDC11 stretch occupies residues 960–1245; it reads ISCRVSFITR…GSYALIQLPT (286 aa). The interval 971–991 is disordered; the sequence is PGERSHPQGLGPPAPEAPELG. A helical transmembrane segment spans residues 1042–1062; that stretch reads IVCVAIFSAICVGVFADRAYY. At 1063-1076 the chain is on the extracellular side; the sequence is YGFASPPSDIAQTT. Residues 1077-1097 form a helical membrane-spanning segment; it reads LVGIILSRGTAASVSFMFSYI. A Ferric oxidoreductase domain is found at 1084 to 1266; the sequence is RGTAASVSFM…YGGDKLVSLS (183 aa). The Cytoplasmic portion of the chain corresponds to 1098-1128; the sequence is LLTMCRNLITFLRETFLNRYVPFDAAVDFHR. A helical transmembrane segment spans residues 1129-1151; that stretch reads WIAMAAVVLAILHSAGHAVNVYI. Over 1152–1185 the chain is Extracellular; that stretch reads FSVSPLSLLACIFPNVFVNDGSKLPQKFYWWFFQ. The chain crosses the membrane as a helical span at residues 1186-1206; that stretch reads TVPGMTGVLLLLVLAIMYVFA. The Cytoplasmic portion of the chain corresponds to 1207 to 1223; that stretch reads SHHFRRRSFRGFWLTHH. Helical transmembrane passes span 1224 to 1244 and 1245 to 1265; these read LYIL…IQLP and TFHI…LVSL. Topologically, residues 1266-1548 are cytoplasmic; that stretch reads SRKKVEISVV…AHFMHHYENF (283 aa). The 107-residue stretch at 1267–1373 folds into the FAD-binding FR-type domain; that stretch reads RKKVEISVVK…DGPFGEGHQE (107 aa).

The protein in the N-terminal section; belongs to the peroxidase family. Heterodimer with DUOXA2; disulfide-linked. Interacts with TXNDC11, TPO and CYBA. In terms of processing, N-glycosylated. As to expression, expressed in colon, small intestine, duodenum and tracheal surface epithelial cells (at protein level). Expressed in thyrocytes. Also detected in kidney, liver, lung, pancreas, prostate, salivary glands, rectum and testis.

The protein resides in the apical cell membrane. It is found in the cell junction. It carries out the reaction NADH + O2 + H(+) = H2O2 + NAD(+). It catalyses the reaction NADPH + O2 + H(+) = H2O2 + NADP(+). It functions in the pathway hormone biosynthesis; thyroid hormone biosynthesis. With respect to regulation, peroxidase activity is inhibited by aminobenzohydrazide. The NADPH oxidase activity is calcium-dependent. Its function is as follows. Generates hydrogen peroxide which is required for the activity of thyroid peroxidase/TPO and lactoperoxidase/LPO. Plays a role in thyroid hormones synthesis and lactoperoxidase-mediated antimicrobial defense at the surface of mucosa. May have its own peroxidase activity through its N-terminal peroxidase-like domain. The polypeptide is Dual oxidase 2 (DUOX2) (Homo sapiens (Human)).